Reading from the N-terminus, the 94-residue chain is UPF0337 protein NE2439 (94 aa).

The interval 74-94 (KNVGEAVSSRQKSVKKRSLYT) is disordered. Over residues 85–94 (KSVKKRSLYT) the composition is skewed to basic residues.

This sequence belongs to the UPF0337 (CsbD) family.

This Nitrosomonas europaea (strain ATCC 19718 / CIP 103999 / KCTC 2705 / NBRC 14298) protein is UPF0337 protein NE2439.